The chain runs to 218 residues: Cytidylate kinase (218 aa).

Position 11 to 19 (11 to 19) interacts with ATP; the sequence is GPGASGKGT.

This sequence belongs to the cytidylate kinase family. Type 1 subfamily.

It localises to the cytoplasm. It catalyses the reaction CMP + ATP = CDP + ADP. The enzyme catalyses dCMP + ATP = dCDP + ADP. This chain is Cytidylate kinase, found in Neisseria meningitidis serogroup A / serotype 4A (strain DSM 15465 / Z2491).